Reading from the N-terminus, the 323-residue chain is Lipoyl synthase (323 aa).

7 residues coordinate [4Fe-4S] cluster: Cys61, Cys66, Cys72, Cys87, Cys91, Cys94, and Ser300. The region spanning 73 to 289 is the Radical SAM core domain; the sequence is WDKKHATFMI…ETVAYTKGFL (217 aa).

It belongs to the radical SAM superfamily. Lipoyl synthase family. [4Fe-4S] cluster serves as cofactor.

Its subcellular location is the cytoplasm. It catalyses the reaction [[Fe-S] cluster scaffold protein carrying a second [4Fe-4S](2+) cluster] + N(6)-octanoyl-L-lysyl-[protein] + 2 oxidized [2Fe-2S]-[ferredoxin] + 2 S-adenosyl-L-methionine + 4 H(+) = [[Fe-S] cluster scaffold protein] + N(6)-[(R)-dihydrolipoyl]-L-lysyl-[protein] + 4 Fe(3+) + 2 hydrogen sulfide + 2 5'-deoxyadenosine + 2 L-methionine + 2 reduced [2Fe-2S]-[ferredoxin]. Its pathway is protein modification; protein lipoylation via endogenous pathway; protein N(6)-(lipoyl)lysine from octanoyl-[acyl-carrier-protein]: step 2/2. In terms of biological role, catalyzes the radical-mediated insertion of two sulfur atoms into the C-6 and C-8 positions of the octanoyl moiety bound to the lipoyl domains of lipoate-dependent enzymes, thereby converting the octanoylated domains into lipoylated derivatives. The sequence is that of Lipoyl synthase from Sinorhizobium medicae (strain WSM419) (Ensifer medicae).